A 433-amino-acid chain; its full sequence is Malate synthase (433 aa).

16-17 (TS) is an acetyl-CoA binding site. Residue D52 coordinates Mg(2+). R84 lines the acetyl-CoA pocket. Glyoxylate-binding positions include R84, E158, and 191–192 (VD). E158 and D192 together coordinate Mg(2+). R236 and L259 together coordinate acetyl-CoA. Residue D388 is the Proton acceptor of the active site.

This sequence belongs to the HpcH/HpaI aldolase family. As to quaternary structure, homotrimer and homohexamer in equilibrium. Requires Mg(2+) as cofactor.

It is found in the cytoplasm. It carries out the reaction glyoxylate + acetyl-CoA + H2O = (S)-malate + CoA + H(+). It functions in the pathway carbohydrate metabolism; glyoxylate cycle; (S)-malate from isocitrate: step 2/2. In terms of biological role, involved in the glyoxylate cycle which synthesizes precursors for carbohydrates from C2 compounds such as acetate. Catalyzes the Claisen condensation between acetyl-coenzyme A (acetyl-CoA) and glyoxylate to form the malyl-CoA intermediate that is subsequently hydrolyzed to produce malate and CoA. This is Malate synthase (aceB) from Haloferax volcanii (strain ATCC 29605 / DSM 3757 / JCM 8879 / NBRC 14742 / NCIMB 2012 / VKM B-1768 / DS2) (Halobacterium volcanii).